The primary structure comprises 952 residues: Alpha-L-rhamnosidase (952 aa).

A signal peptide spans 1–21; it reads MKYNKLLFSLLLLAVFCFSCK. Alpha-L-rhamnose-binding positions include Asp520, 524–525, Asp532, and Trp594; that span reads RE. The active-site Proton donor is Glu525. The active-site Proton acceptor is the Glu809. Alpha-L-rhamnose is bound at residue His826.

Belongs to the glycosyl hydrolase 78 family.

It is found in the cell membrane. The enzyme catalyses Hydrolysis of terminal non-reducing alpha-L-rhamnose residues in alpha-L-rhamnosides.. Functionally, alpha-L-rhamnosidase that may be involved in ulvan degradation. Ulvan is the main polysaccharide component of the Ulvales (green seaweed) cell wall. It is composed of disaccharide building blocks comprising 3-sulfated rhamnose (Rha3S) linked to D-glucuronic acid (GlcA), L-iduronic acid (IduA), or D-xylose (Xyl). In Formosa agariphila (strain DSM 15362 / KCTC 12365 / LMG 23005 / KMM 3901 / M-2Alg 35-1), this protein is Alpha-L-rhamnosidase.